Reading from the N-terminus, the 363-residue chain is Pyrimidine monooxygenase RutA (363 aa).

FMN is bound by residues 49–50 (IK), Asn115, Glu124, 140–141 (RY), and Ser190.

This sequence belongs to the NtaA/SnaA/DszA monooxygenase family. RutA subfamily.

It carries out the reaction uracil + FMNH2 + NADH + O2 = (Z)-3-ureidoacrylate + FMN + NAD(+) + H2O + H(+). The catalysed reaction is thymine + FMNH2 + NADH + O2 = (Z)-2-methylureidoacrylate + FMN + NAD(+) + H2O + H(+). Catalyzes the pyrimidine ring opening between N-3 and C-4 by an unusual flavin hydroperoxide-catalyzed mechanism, adding oxygen atoms in the process to yield ureidoacrylate peracid, that immediately reacts with FMN forming ureidoacrylate and FMN-N(5)-oxide. The FMN-N(5)-oxide reacts spontaneously with NADH to produce FMN. Requires the flavin reductase RutF to regenerate FMN in vivo. This Pantoea ananatis (strain LMG 20103) protein is Pyrimidine monooxygenase RutA.